A 658-amino-acid polypeptide reads, in one-letter code: MSLNFNQKNAIELINGPCLILAGAGSGKTKVIINKIIYLINNCQYKPGNIIAVTFTNKAAHEIKVRLAKHLNLLQIKKMIISTFHSLGLEIIKKEINTLKFNSNFSLFDERDQMMLLKKICSKSIKNDTKLLKKLVFMISFWKNKFLTPLQVQLSAQSNLEKDFAFFYKQYTFHLRKSNILDFDDLICIPTSLLKNNQIIQNRWQKKISYLLVDEYQDTNNSQYELIKMLTNVNSNFTLVGDDDQSIYSWRGAKPQNLFLIKKDFPNLKIIKMEQNYRSYGRILKAANKLISNNLHYFKKKLFSNLEYGNKIKVIIGKNEKNEAEKIADKIIHECSNDIMQYKDYAILYRGNYQSQILEKTFLKKNIPYDISTNSSFFSRPEIKDLLSYLRLIVNPDDNHAFIRILNIPHRQIGLTTLNKLEELASKKNKSLFQISNDIEIKKILRERTVKKIKDFIYWIKKIIKLSLLKEDIILDKIINDIKYELWLTKILKEPKKIKTSINNIYTLSNWLKEMLRGNEFEKPMNLLQIVKKMTLRDILEKKIQINEIPKNRVQLMTLHSSKGLEFSSVFIIGMNEGILPNIKSINNDNIEEERRLTYVGMTRARKELFFTYCQTRIQYGQKLYTAPSRFLFELPQEDLQWEKDDYLDAFHTKEKKI.

Residues 1-280 form the UvrD-like helicase ATP-binding domain; it reads MSLNFNQKNA…IKMEQNYRSY (280 aa). Residues 22–29 and arginine 278 contribute to the ATP site; that span reads AGAGSGKT. The 284-residue stretch at 281–564 folds into the UvrD-like helicase C-terminal domain; it reads GRILKAANKL…QLMTLHSSKG (284 aa).

Belongs to the helicase family. UvrD subfamily. In terms of assembly, homodimer.

The catalysed reaction is Couples ATP hydrolysis with the unwinding of duplex DNA by translocating in the 3'-5' direction.. It carries out the reaction ATP + H2O = ADP + phosphate + H(+). Rep helicase is a single-stranded DNA-dependent ATPase involved in DNA replication; it can initiate unwinding at a nick in the DNA. It binds to the single-stranded DNA and acts in a progressive fashion along the DNA in the 3' to 5' direction. This Buchnera aphidicola subsp. Schizaphis graminum (strain Sg) protein is ATP-dependent DNA helicase Rep.